The primary structure comprises 709 residues: Homeobox-leucine zipper protein HDG4 (709 aa).

The disordered stretch occupies residues glutamate 61–tyrosine 92. The segment at residues lysine 88–glutamine 147 is a DNA-binding region (homeobox). Residues glutamine 137–methionine 205 adopt a coiled-coil conformation. The region spanning alanine 229 to serine 466 is the START domain.

Belongs to the HD-ZIP homeobox family. Class IV subfamily. Expressed in flowers.

It is found in the nucleus. Functionally, probable transcription factor. The chain is Homeobox-leucine zipper protein HDG4 from Arabidopsis thaliana (Mouse-ear cress).